The primary structure comprises 408 residues: RNA-splicing ligase RtcB1 (408 aa).

Mn(2+)-binding residues include aspartate 75, cysteine 78, histidine 168, histidine 185, and histidine 281. 167-171 is a binding site for GMP; it reads NHFIE. GMP is bound by residues 281–282, 313–316, serine 320, 337–340, and lysine 407; these read HN, PGSM, and HGAG. The GMP-histidine intermediate role is filled by histidine 337.

This sequence belongs to the RtcB family. In terms of assembly, monomer. Mn(2+) serves as cofactor.

The enzyme catalyses a 3'-end 3'-phospho-ribonucleotide-RNA + a 5'-end dephospho-ribonucleoside-RNA + GTP = a ribonucleotidyl-ribonucleotide-RNA + GMP + diphosphate. It catalyses the reaction a 3'-end 2',3'-cyclophospho-ribonucleotide-RNA + a 5'-end dephospho-ribonucleoside-RNA + GTP + H2O = a ribonucleotidyl-ribonucleotide-RNA + GMP + diphosphate + H(+). GTP-dependent RNA ligase that is involved in RNA repair. Joins RNA with 2',3'-cyclic-phosphate or 3'-phosphate ends to RNA with 5'-hydroxy ends. GTP-dependent RNA ligase that is involved in tRNA repair. Repairs broken tRNA(Asp) and tRNA(Arg) that have been cleaved by colicin E5 or colicin D, respectively. Does not repair damaged 16S rRNA in 30S ribosomal subunits. This is RNA-splicing ligase RtcB1 from Escherichia coli (strain ATCC 25922 / DSM 1103 / LMG 8223 / NCIMB 12210 / NCTC 12241 / WDCM 00013 / Seattle 1946).